Reading from the N-terminus, the 209-residue chain is Ion-translocating oxidoreductase complex subunit G (209 aa).

The Cytoplasmic portion of the chain corresponds to 1 to 8; the sequence is MLTAIRKN. The helical transmembrane segment at 9–29 threads the bilayer; sequence GLILAVFACVSTGLVALTYAL. The Periplasmic portion of the chain corresponds to 30 to 209; it reads TAEQIQQQEQ…HNQPNPCEGQ (180 aa). Thr175 is subject to FMN phosphoryl threonine.

Belongs to the RnfG family. In terms of assembly, the complex is composed of six subunits: RnfA, RnfB, RnfC, RnfD, RnfE and RnfG. FMN is required as a cofactor.

The protein localises to the cell inner membrane. Its function is as follows. Part of a membrane-bound complex that couples electron transfer with translocation of ions across the membrane. The protein is Ion-translocating oxidoreductase complex subunit G of Vibrio cholerae serotype O1 (strain ATCC 39541 / Classical Ogawa 395 / O395).